A 366-amino-acid polypeptide reads, in one-letter code: Isocitrate dehydrogenase [NAD] subunit alpha, mitochondrial (366 aa).

A mitochondrion-targeting transit peptide spans M1–F27. N6-succinyllysine is present on K77. At T101 the chain carries Phosphothreonine. Positions 115, 125, and 146 each coordinate substrate. Residue K223 is modified to N6-acetyllysine. Positions 233, 257, and 261 each coordinate Mg(2+). Position 343 is an N6-acetyllysine; alternate (K343). N6-succinyllysine; alternate is present on K343. K350 carries the N6-succinyllysine modification.

Belongs to the isocitrate and isopropylmalate dehydrogenases family. Heterooligomer of subunits alpha (IDH3A), beta (IDH3B), and gamma (IDH3G) in the apparent ratio of 2:1:1. The heterodimer containing one IDH3A and one IDH3B subunit and the heterodimer containing one IDH3A and one IDH3G subunit assemble into a heterotetramer (which contains two subunits of IDH3A, one of IDH3B and one of IDH3G) and further into the heterooctamer. It depends on Mg(2+) as a cofactor. The cofactor is Mn(2+).

The protein resides in the mitochondrion. The enzyme catalyses D-threo-isocitrate + NAD(+) = 2-oxoglutarate + CO2 + NADH. The heterotetramer and the heterodimer composed of IDH3A and IDH3G subunits can be allosterically activated by citrate (CIT) or/and ADP, and the two activators can act independently or synergistically. The heterodimer composed of IDH3A and IDH3B subunits cannot be allosterically regulated and the allosteric regulation of the heterotetramer is through the IDH3G subunit and not the IDH3B subunit. The IDH3G subunit contains the allosteric site which consists of a CIT-binding site and an ADP-binding site, and the binding of CIT and ADP causes conformational changes at the allosteric site which are transmitted to the active site in the catalytic subunit (IDH3A) through a cascade of conformational changes at the heterodimer interface, leading to stabilization of the isocitrate-binding at the active site and thus activation of the enzyme. ATP can activate the heterotetramer and the heterodimer composed of IDH3A and IDH3G subunits at low concentrations but inhibits their activities at high concentrations, whereas ATP exhibits only inhibitory effect on the heterodimer composed of IDH3A and IDH3B subunits. Functionally, catalytic subunit of the enzyme which catalyzes the decarboxylation of isocitrate (ICT) into alpha-ketoglutarate. The heterodimer composed of the alpha (IDH3A) and beta (IDH3B) subunits and the heterodimer composed of the alpha (IDH3A) and gamma (IDH3G) subunits, have considerable basal activity but the full activity of the heterotetramer (containing two subunits of IDH3A, one of IDH3B and one of IDH3G) requires the assembly and cooperative function of both heterodimers. The polypeptide is Isocitrate dehydrogenase [NAD] subunit alpha, mitochondrial (IDH3A) (Sus scrofa (Pig)).